The sequence spans 480 residues: Ochratoxinase (480 aa).

Zn(2+) contacts are provided by H111, H113, K246, H287, and H307. Residue K246 is part of the active site. Residue D378 is part of the active site.

The protein belongs to the metallo-dependent hydrolases superfamily. Ochratoxinase amidase 2 family. Homooctamer. It depends on Zn(2+) as a cofactor.

The protein resides in the secreted. It catalyses the reaction ochratoxin A + H2O = ochratoxin alpha + L-phenylalanine. Its activity is regulated as follows. The Zn(2+)-specific chelator 1,10-phenanthroline inhibits the enzyme activity. Its function is as follows. Carboxypeptidase that catalyzes the release of a C-terminal amino acid with specific catalytic activity for aromatic amino acids such as phenylalanine. Is able to degrade ochratoxin A, one of the five major mycotoxins most harmful to humans and animals that is produced by Aspergillus and Penicillium species and occurs in a wide range of agricultural products. The chain is Ochratoxinase from Aspergillus niger (strain ATCC MYA-4892 / CBS 513.88 / FGSC A1513).